We begin with the raw amino-acid sequence, 1269 residues long: Phospholipase D A (1269 aa).

The segment covering 55-64 has biased composition (polar residues); the sequence is YTSVGSAPTT. The tract at residues 55–121 is disordered; that stretch reads YTSVGSAPTT…NNNLQSPTQS (67 aa). 2 stretches are compositionally biased toward low complexity: residues 65-87 and 95-114; these read NNNSNSNSNSNSSNRSLNNSGSS and NSNKKVNNNNNNNNNNNNNN. Residues 131 to 192 are a coiled coil; the sequence is SKALHDFEEK…ELKSLDELLH (62 aa). Residues 222 to 232 are compositionally biased toward polar residues; the sequence is NSVTNNTPSSA. 2 disordered regions span residues 222-269 and 300-320; these read NSVT…SSST and NSYPNSIIPQGTPLDNPDPNL. Positions 233 to 269 are enriched in low complexity; that stretch reads TPLTLSNNNNYTSSSLATSPTTNSSSSSSSSSSSSST. 2 PLD phosphodiesterase domains span residues 435 to 462 and 704 to 731; these read IYWSHHQKTLIIDQEIAFVGGVDFCFGR and EQIYVHSKLMIVDDRTIIVGSANINDRS. Residues His-440, Lys-442, Asp-447, His-709, Lys-711, and Asp-716 contribute to the active site. Positions 803-835 form a coiled coil; sequence NNNNNSNINNNINNNNNEINNNNNNNNNNNSNE. 3 stretches are compositionally biased toward low complexity: residues 810–850, 859–906, and 934–943; these read INNN…NSNS, NLPP…GTTN, and SSPQDSPQDS. Disordered stretches follow at residues 810–966 and 983–1007; these read INNN…HQSP and SNEQLPPPPSSTTPPPPPPPLTTTD. A compositionally biased stretch (pro residues) spans 987-1003; it reads LPPPPSSTTPPPPPPPL. A coiled-coil region spans residues 1059 to 1096; sequence TTAQQQQQQQQQQQQQQQQQQQQQQQQQQQQQQQQQQQ. Residues 1116–1167 form a disordered region; that stretch reads IKKKRSSISPSTSSNKLLLSGNGSGDSIRVVTDSGSSPRGQPRSMSSLHDHA. The span at 1122 to 1142 shows a compositional bias: low complexity; the sequence is SISPSTSSNKLLLSGNGSGDS. Residues 1148–1162 are compositionally biased toward polar residues; it reads DSGSSPRGQPRSMSS.

The protein belongs to the phospholipase D family.

The catalysed reaction is a 1,2-diacyl-sn-glycero-3-phosphocholine + H2O = a 1,2-diacyl-sn-glycero-3-phosphate + choline + H(+). With respect to regulation, inhibited by butan-1-ol. Plays a role in cell growth. Hydrolyzes membrane phospholipids, such as PtdCho free headgroup and PtdOH (phosphatidic acid; signaling molecule on its own). Involved in the inhibition of actin-based motility and endocytosis. Its inhibition causes complete collapse of F-actin organization. In Dictyostelium discoideum (Social amoeba), this protein is Phospholipase D A (pldA).